The primary structure comprises 277 residues: Shikimate dehydrogenase (NADP(+)) (277 aa).

Shikimate-binding positions include 15-17 and Thr-62; that span reads SLS. Lys-66 functions as the Proton acceptor in the catalytic mechanism. Positions 87 and 102 each coordinate shikimate. NADP(+) contacts are provided by residues 127 to 131, 151 to 156, and Ile-219; these read GAGGA and NRTVDK. Residue Tyr-221 coordinates shikimate. Gly-242 is a binding site for NADP(+).

It belongs to the shikimate dehydrogenase family. In terms of assembly, homodimer.

The catalysed reaction is shikimate + NADP(+) = 3-dehydroshikimate + NADPH + H(+). It participates in metabolic intermediate biosynthesis; chorismate biosynthesis; chorismate from D-erythrose 4-phosphate and phosphoenolpyruvate: step 4/7. Its function is as follows. Involved in the biosynthesis of the chorismate, which leads to the biosynthesis of aromatic amino acids. Catalyzes the reversible NADPH linked reduction of 3-dehydroshikimate (DHSA) to yield shikimate (SA). This is Shikimate dehydrogenase (NADP(+)) from Bacillus cereus (strain G9842).